A 323-amino-acid polypeptide reads, in one-letter code: Palmitoyltransferase ZDHHC20-B (323 aa).

The Cytoplasmic segment spans residues 1-14 (MAPTHVLRCCQRGL). A helical membrane pass occupies residues 15–35 (AWIPVIFIALVVCWSYYAYVV). Residues 36-41 (ELCLLV) lie on the Lumenal side of the membrane. The helical transmembrane segment at 42–62 (YLVVFHLSFVMFVWSYWKTIF) threads the bilayer. At 63-157 (TKPANPSKEF…NNCVGFSNYK (95 aa)) the chain is on the cytoplasmic side. The DHHC domain maps to 114–164 (RYCDRCQVIKPDRCHHCSACDMCVLKMDHHCPWVNNCVGFSNYKFFILFLT). C144 acts as the S-palmitoyl cysteine intermediate in catalysis. Residues 158 to 178 (FFILFLTYSLVYCLFIAASVL) form a helical membrane-spanning segment. Residues 179–195 (QYFIKFWTSDLPESHAK) are Lumenal-facing. The helical transmembrane segment at 196–219 (FHVLFLFFVAAMFCISILSLFTYH) threads the bilayer. Residues 220–323 (LWLVGKNRST…KQAKKKKTDE (104 aa)) lie on the Cytoplasmic side of the membrane.

It belongs to the DHHC palmitoyltransferase family.

Its subcellular location is the golgi apparatus membrane. It localises to the cell membrane. The protein localises to the cytoplasm. It is found in the perinuclear region. The protein resides in the endoplasmic reticulum membrane. Its subcellular location is the endoplasmic reticulum-Golgi intermediate compartment membrane. It catalyses the reaction L-cysteinyl-[protein] + hexadecanoyl-CoA = S-hexadecanoyl-L-cysteinyl-[protein] + CoA. The enzyme catalyses L-cysteinyl-[protein] + tetradecanoyl-CoA = S-tetradecanoyl-L-cysteinyl-[protein] + CoA. It carries out the reaction L-cysteinyl-[protein] + octadecanoyl-CoA = S-octadecanoyl-L-cysteinyl-[protein] + CoA. In terms of biological role, palmitoyltransferase that could catalyze the addition of palmitate onto various protein substrates. Catalyzes palmitoylation of Cys residues on protein substrates and has a preference for acyl-CoA with C16 fatty acid chains but may also utilize acyl-CoA with C14 and C18 fatty acid chains. This Danio rerio (Zebrafish) protein is Palmitoyltransferase ZDHHC20-B (zdhhc20b).